Here is a 68-residue protein sequence, read N- to C-terminus: Antimicrobial peptide VpCT3 (68 aa).

Residues 1–23 (MKTQIVILIVAVLVLQLVSQSDA) form the signal peptide. The residue at position 36 (Leu-36) is a Leucine amide. Positions 37–68 (GKRGLKNLDQYNDLFDGEISDADIKFLQDLMR) are excised as a propeptide.

This sequence belongs to the non-disulfide-bridged peptide (NDBP) superfamily. Short antimicrobial peptide (group 4) family. Expressed by the venom gland.

The protein resides in the secreted. It is found in the target cell membrane. In terms of biological role, antimicrobial peptide with weak activity against all bacteria tested (MIC&gt;100 uM) and all yeasts tested (MIC&gt;200 uM). Also provokes weak hemolysis on human erythrocytes (HC(50)=83.7 uM). The polypeptide is Antimicrobial peptide VpCT3 (Mesomexovis punctatus (Scorpion)).